We begin with the raw amino-acid sequence, 157 residues long: Protein UXT (157 aa).

This sequence belongs to the UXT family. As to quaternary structure, homohexamer. Component of the PAQosome complex which is responsible for the biogenesis of several protein complexes and which consists of R2TP complex members RUVBL1, RUVBL2, RPAP3 and PIH1D1, URI complex members PFDN2, PFDN6, PDRG1, UXT and URI1 as well as ASDURF, POLR2E and DNAAF10/WDR92. Interacts with LRPPRC. Interacts with androgen receptor AR (via N-terminus). Interacts with estrogen receptor ESR1; the interaction relocalizes ESR1 from the nucleus to the cytoplasm. In the nucleus, interacts specifically with RELA (via RHD domain) and forms a dynamic complex with NF-kappa-B and is recruited to the NF-kappa-B enhanceosome upon stimulation. Interacts with MECOM. Interacts with URI1. In terms of assembly, part of complex I composed of TNF-alpha receptor TNFRSF1A, TRADD, TRAF2 and RIPK1 formed in response to TNF-alpha stimulation. Within the complex, interacts (via TPQE motif) with TRAF2; the interaction prevents the recruitment of FADD and CASP8/caspase 8 to complex I. Post-translationally, ubiquitinated by E3 ubiquitin-protein ligase complex containing FBXO7; leading to proteasomal degradation. Ubiquitous. Expressed in prostate epithelial cells. Expressed in mammary epithelial cells. Highest levels in the heart, skeletal muscle, pancreas, kidney, liver, adrenal gland, peripheral blood leukocytes, lymph node, prostate, and thyroid and the lowest levels in bladder and uterus. Overexpressed in a number of tumor tissues.

It localises to the cytoplasm. The protein resides in the nucleus. It is found in the cytoskeleton. Its subcellular location is the microtubule organizing center. The protein localises to the centrosome. It localises to the spindle pole. Involved in gene transcription regulation. Acts in concert with the corepressor URI1 to regulate androgen receptor AR-mediated transcription. Together with URI1, associates with chromatin to the NKX3-1 promoter region. Negatively regulates the transcriptional activity of the estrogen receptor ESR1 by inducing its translocation into the cytoplasm. May act as nuclear chaperone that facilitates the formation of the NF-kappa-B enhanceosome and thus positively regulates NF-kappa-B transcription activity. Potential component of mitochondrial-associated LRPPRC, a multidomain organizer that potentially integrates mitochondria and the microtubular cytoskeleton with chromosome remodeling. Increasing concentrations of UXT contributes to progressive aggregation of mitochondria and cell death potentially through its association with LRPPRC. Suppresses cell transformation and it might mediate this function by interaction and inhibition of the biological activity of cell proliferation and survival stimulatory factors like MECOM. Functionally, plays a role in protecting cells against TNF-alpha-induced apoptosis by preventing the recruitment of FADD and caspase 8 to the apoptotic complex I, composed of TRADD, TRAF2 and RIPK1/RIP. The protein is Protein UXT (UXT) of Homo sapiens (Human).